Consider the following 177-residue polypeptide: Dynein light chain Tctex-type 5-A (177 aa).

Belongs to the dynein light chain Tctex-type family.

The polypeptide is Dynein light chain Tctex-type 5-A (Dynlt5-a) (Xenopus laevis (African clawed frog)).